A 212-amino-acid polypeptide reads, in one-letter code: Ribosomal RNA large subunit methyltransferase E (212 aa).

S-adenosyl-L-methionine-binding residues include Gly-57, Trp-59, Asp-77, Asp-93, and Asp-122. Lys-162 serves as the catalytic Proton acceptor.

This sequence belongs to the class I-like SAM-binding methyltransferase superfamily. RNA methyltransferase RlmE family.

It is found in the cytoplasm. It catalyses the reaction uridine(2552) in 23S rRNA + S-adenosyl-L-methionine = 2'-O-methyluridine(2552) in 23S rRNA + S-adenosyl-L-homocysteine + H(+). Functionally, specifically methylates the uridine in position 2552 of 23S rRNA at the 2'-O position of the ribose in the fully assembled 50S ribosomal subunit. The chain is Ribosomal RNA large subunit methyltransferase E from Coxiella burnetii (strain RSA 493 / Nine Mile phase I).